We begin with the raw amino-acid sequence, 537 residues long: Phosphoenolpyruvate carboxykinase (ATP) (537 aa).

Residues arginine 61, tyrosine 195, and lysine 201 each contribute to the substrate site. Residues lysine 201, histidine 220, and 236–244 (GLSGTGKTT) contribute to the ATP site. Mn(2+) is bound by residues lysine 201 and histidine 220. Residue aspartate 257 participates in Mn(2+) binding. Glutamate 285, arginine 323, and threonine 448 together coordinate ATP. A substrate-binding site is contributed by arginine 323.

It belongs to the phosphoenolpyruvate carboxykinase (ATP) family. Mn(2+) serves as cofactor.

The protein localises to the cytoplasm. It catalyses the reaction oxaloacetate + ATP = phosphoenolpyruvate + ADP + CO2. It participates in carbohydrate biosynthesis; gluconeogenesis. Its function is as follows. Involved in the gluconeogenesis. Catalyzes the conversion of oxaloacetate (OAA) to phosphoenolpyruvate (PEP) through direct phosphoryl transfer between the nucleoside triphosphate and OAA. This Rhodopseudomonas palustris (strain TIE-1) protein is Phosphoenolpyruvate carboxykinase (ATP).